Here is a 706-residue protein sequence, read N- to C-terminus: Polyribonucleotide nucleotidyltransferase (706 aa).

2 residues coordinate Mg(2+): Asp486 and Asp492. The region spanning 553-612 is the KH domain; the sequence is PRIYTMKINPEKIKDVIGKGGSVIRALTDETGTTIEIEDDGTIKIAATDGDKAKHAIRRI. The S1 motif domain occupies 622–690; it reads NRIYAGKVTR…RQGRIRLSMK (69 aa).

It belongs to the polyribonucleotide nucleotidyltransferase family. In terms of assembly, component of the RNA degradosome, which is a multiprotein complex involved in RNA processing and mRNA degradation. The cofactor is Mg(2+).

Its subcellular location is the cytoplasm. The enzyme catalyses RNA(n+1) + phosphate = RNA(n) + a ribonucleoside 5'-diphosphate. Its function is as follows. Involved in mRNA degradation. Catalyzes the phosphorolysis of single-stranded polyribonucleotides processively in the 3'- to 5'-direction. The sequence is that of Polyribonucleotide nucleotidyltransferase from Yersinia enterocolitica serotype O:8 / biotype 1B (strain NCTC 13174 / 8081).